Here is a 341-residue protein sequence, read N- to C-terminus: Golgi-associated RAB2 interactor protein 1B (341 aa).

It belongs to the GARIN family. As to expression, expressed in testis (at protein level).

Its subcellular location is the golgi apparatus. Its function is as follows. RAB2B effector protein required for accurate acrosome formation and normal male fertility. In complex with RAB2A/RAB2B, seems to suppress excessive vesicle trafficking during acrosome formation. The protein is Golgi-associated RAB2 interactor protein 1B of Mus musculus (Mouse).